Here is a 433-residue protein sequence, read N- to C-terminus: 3-phosphoshikimate 1-carboxyvinyltransferase (433 aa).

3-phosphoshikimate is bound by residues Lys-15, Ser-16, and Arg-20. Residue Lys-15 coordinates phosphoenolpyruvate. Gly-96 and Arg-124 together coordinate phosphoenolpyruvate. 3-phosphoshikimate contacts are provided by Ser-169, Gln-171, Ser-195, Asp-318, and Lys-345. Gln-171 lines the phosphoenolpyruvate pocket. The Proton acceptor role is filled by Asp-318. Arg-349 and Arg-393 together coordinate phosphoenolpyruvate.

This sequence belongs to the EPSP synthase family. Monomer.

Its subcellular location is the cytoplasm. It catalyses the reaction 3-phosphoshikimate + phosphoenolpyruvate = 5-O-(1-carboxyvinyl)-3-phosphoshikimate + phosphate. The protein operates within metabolic intermediate biosynthesis; chorismate biosynthesis; chorismate from D-erythrose 4-phosphate and phosphoenolpyruvate: step 6/7. Its function is as follows. Catalyzes the transfer of the enolpyruvyl moiety of phosphoenolpyruvate (PEP) to the 5-hydroxyl of shikimate-3-phosphate (S3P) to produce enolpyruvyl shikimate-3-phosphate and inorganic phosphate. The polypeptide is 3-phosphoshikimate 1-carboxyvinyltransferase (Pelodictyon phaeoclathratiforme (strain DSM 5477 / BU-1)).